A 73-amino-acid chain; its full sequence is Putative antitoxin VapB18 (73 aa).

It belongs to the UPF0330 family.

Possibly the antitoxin component of a type II toxin-antitoxin (TA) system. Its cognate toxin is VapC18 (Potential). The polypeptide is Putative antitoxin VapB18 (vapB18) (Archaeoglobus fulgidus (strain ATCC 49558 / DSM 4304 / JCM 9628 / NBRC 100126 / VC-16)).